The sequence spans 66 residues: MPKLKTKSGAKKRFKITATGLLKAGVAGKRHRLIGHNGKYIRQNRGTKVMSASDTKTIRSYMPYGL.

It belongs to the bacterial ribosomal protein bL35 family.

This Caulobacter sp. (strain K31) protein is Large ribosomal subunit protein bL35.